The sequence spans 396 residues: Beta-1,3-N-acetylglucosaminyltransferase radical fringe (396 aa).

At 1–6 the chain is on the cytoplasmic side; that stretch reads MNFSCL. Residues 7–27 form a helical; Signal-anchor for type II membrane protein membrane-spanning segment; sequence GLSKICFLVSVIFCTFLLLFI. At 28 to 396 the chain is on the lumenal side; the sequence is PKTKTPWRPR…THWCPPRKTR (369 aa). 2 N-linked (GlcNAc...) asparagine glycosylation sites follow: Asn49 and Asn120. Arg145 serves as a coordination point for substrate. The N-linked (GlcNAc...) asparagine glycan is linked to Asn184. 2 disulfide bridges follow: Cys185–Cys196 and Cys214–Cys277. Asp218 contacts substrate. Position 219 (Asp219) interacts with Mn(2+). Residue Asp307 is part of the active site. His331 contacts Mn(2+). A disulfide bridge connects residues Cys381 and Cys390.

It belongs to the glycosyltransferase 31 family. Mn(2+) is required as a cofactor. As to expression, detected in the mesanchymal region of the developing limb. Expressed in mesoderm but not in ectoderm with no evident boundary of expression.

The protein localises to the golgi apparatus membrane. It catalyses the reaction 3-O-(alpha-L-fucosyl)-L-threonyl-[EGF-like domain protein] + UDP-N-acetyl-alpha-D-glucosamine = 3-O-(N-acetyl-beta-D-glucosaminyl-(1-&gt;3)-alpha-L-fucosyl)-L-threonyl-[EGF-like domain protein] + UDP + H(+). The enzyme catalyses 3-O-(alpha-L-fucosyl)-L-seryl-[EGF-like domain protein] + UDP-N-acetyl-alpha-D-glucosamine = 3-O-(N-acetyl-beta-D-glucosaminyl-(1-&gt;3)-alpha-L-fucosyl)-L-seryl-[EGF-like domain protein] + UDP + H(+). Its function is as follows. Glycosyltransferase that initiates the elongation of O-linked fucose residues attached to EGF-like repeats in the extracellular domain of Notch molecules. Involved in forelimb development and in adult forelimb regeneration. The protein is Beta-1,3-N-acetylglucosaminyltransferase radical fringe (RFNG) of Notophthalmus viridescens (Eastern newt).